The primary structure comprises 459 residues: UDP-N-acetylmuramate--L-alanine ligase (459 aa).

118-124 (GTHGKTT) provides a ligand contact to ATP.

This sequence belongs to the MurCDEF family.

The protein resides in the cytoplasm. The catalysed reaction is UDP-N-acetyl-alpha-D-muramate + L-alanine + ATP = UDP-N-acetyl-alpha-D-muramoyl-L-alanine + ADP + phosphate + H(+). It functions in the pathway cell wall biogenesis; peptidoglycan biosynthesis. Cell wall formation. The sequence is that of UDP-N-acetylmuramate--L-alanine ligase from Lachnospira eligens (strain ATCC 27750 / DSM 3376 / VPI C15-48 / C15-B4) (Eubacterium eligens).